Consider the following 63-residue polypeptide: Large ribosomal subunit protein uL30 (63 aa).

The protein belongs to the universal ribosomal protein uL30 family. As to quaternary structure, part of the 50S ribosomal subunit.

The protein is Large ribosomal subunit protein uL30 of Rickettsia akari (strain Hartford).